Here is a 475-residue protein sequence, read N- to C-terminus: PRAME family member 20 (475 aa).

Residues 97–124 (RWKLQVLDLQDVSENFWMVWSEAMARRC) form an LRR 1; degenerate repeat. One copy of the LRR 2; degenerate repeat lies at 179–203 (HLCCKKLKMLGMLFHNIRNILKTVN). The LRR 3; degenerate repeat unit spans residues 204–230 (LDCIQEVEVNCNWTLPVLAEFTPYLGQ). An LRR 4; degenerate repeat occupies 231–265 (MRNLRKLVLSDIDSRYISPEQKKEFVTQFTTQFLK). 5 LRR repeats span residues 266 to 291 (LRCLQKLYMNSVSFLEGHLDQMLSCL), 292 to 323 (KTSLNILAITNCVLLESDLKHLSKYPSIGQLK), 324 to 342 (TLDLSGTRLANFSLVPLQV), 348 to 375 (AATLEYLDLDDCGIVDSQVNAILPALSR), and 376 to 400 (CFELTTFSFRGNPISTATLENLLCH).

The protein belongs to the PRAME family.

The protein is PRAME family member 20 of Homo sapiens (Human).